Here is a 107-residue protein sequence, read N- to C-terminus: Translation initiation factor IF-1, chloroplastic (107 aa).

Positions 8–83 (REKKNPREAK…SKGRIIYRLP (76 aa)) constitute an S1-like domain. The disordered stretch occupies residues 81-107 (RLPHKDSKRTEDSKDTEDLKDTKDSKG). Positions 83–107 (PHKDSKRTEDSKDTEDLKDTKDSKG) are enriched in basic and acidic residues.

Belongs to the IF-1 family. In terms of assembly, component of the 30S ribosomal translation pre-initiation complex which assembles on the 30S ribosome in the order IF-2 and IF-3, IF-1 and N-formylmethionyl-tRNA(fMet); mRNA recruitment can occur at any time during PIC assembly.

The protein resides in the plastid. The protein localises to the chloroplast. One of the essential components for the initiation of protein synthesis. Stabilizes the binding of IF-2 and IF-3 on the 30S subunit to which N-formylmethionyl-tRNA(fMet) subsequently binds. Helps modulate mRNA selection, yielding the 30S pre-initiation complex (PIC). Upon addition of the 50S ribosomal subunit IF-1, IF-2 and IF-3 are released leaving the mature 70S translation initiation complex. This chain is Translation initiation factor IF-1, chloroplastic, found in Oryza sativa subsp. indica (Rice).